Consider the following 386-residue polypeptide: Succinate--CoA ligase [ADP-forming] subunit beta (386 aa).

ATP contacts are provided by residues lysine 46, 53–55 (GRG), glutamate 99, glutamine 102, and glutamate 107. Mg(2+) is bound by residues asparagine 199 and aspartate 213. Substrate contacts are provided by residues asparagine 264 and 321-323 (GIV).

Belongs to the succinate/malate CoA ligase beta subunit family. As to quaternary structure, heterotetramer of two alpha and two beta subunits. Mg(2+) is required as a cofactor.

The enzyme catalyses succinate + ATP + CoA = succinyl-CoA + ADP + phosphate. It carries out the reaction GTP + succinate + CoA = succinyl-CoA + GDP + phosphate. It functions in the pathway carbohydrate metabolism; tricarboxylic acid cycle; succinate from succinyl-CoA (ligase route): step 1/1. In terms of biological role, succinyl-CoA synthetase functions in the citric acid cycle (TCA), coupling the hydrolysis of succinyl-CoA to the synthesis of either ATP or GTP and thus represents the only step of substrate-level phosphorylation in the TCA. The beta subunit provides nucleotide specificity of the enzyme and binds the substrate succinate, while the binding sites for coenzyme A and phosphate are found in the alpha subunit. This is Succinate--CoA ligase [ADP-forming] subunit beta from Ruthia magnifica subsp. Calyptogena magnifica.